A 255-amino-acid polypeptide reads, in one-letter code: Mediator of RNA polymerase II transcription subunit 18 (255 aa).

It belongs to the Mediator complex subunit 18 family. In terms of assembly, component of the Mediator complex.

Its subcellular location is the nucleus. Component of the Mediator complex, a coactivator involved in the regulated transcription of nearly all RNA polymerase II-dependent genes. Mediator functions as a bridge to convey information from gene-specific regulatory proteins to the basal RNA polymerase II transcription machinery. Mediator is recruited to promoters by direct interactions with regulatory proteins and serves as a scaffold for the assembly of a functional preinitiation complex with RNA polymerase II and the general transcription factors. The protein is Mediator of RNA polymerase II transcription subunit 18 (SRB5) of Kluyveromyces lactis (strain ATCC 8585 / CBS 2359 / DSM 70799 / NBRC 1267 / NRRL Y-1140 / WM37) (Yeast).